The sequence spans 416 residues: UDP-N-acetylmuramoylalanine--D-glutamate ligase (416 aa).

108–114 is an ATP binding site; sequence GTVGKTT.

This sequence belongs to the MurCDEF family.

The protein resides in the cytoplasm. The enzyme catalyses UDP-N-acetyl-alpha-D-muramoyl-L-alanine + D-glutamate + ATP = UDP-N-acetyl-alpha-D-muramoyl-L-alanyl-D-glutamate + ADP + phosphate + H(+). The protein operates within cell wall biogenesis; peptidoglycan biosynthesis. Cell wall formation. Catalyzes the addition of glutamate to the nucleotide precursor UDP-N-acetylmuramoyl-L-alanine (UMA). This is UDP-N-acetylmuramoylalanine--D-glutamate ligase from Chlamydia muridarum (strain MoPn / Nigg).